A 345-amino-acid polypeptide reads, in one-letter code: L-threonine 3-dehydrogenase (345 aa).

Position 39 (cysteine 39) interacts with Zn(2+). Catalysis depends on charge relay system residues threonine 41 and histidine 44. Positions 64, 65, 94, 97, 100, and 108 each coordinate Zn(2+). Residues isoleucine 176, aspartate 196, arginine 201, 263 to 265, and 287 to 288 each bind NAD(+); these read LGI and VY.

This sequence belongs to the zinc-containing alcohol dehydrogenase family. Homotetramer. The cofactor is Zn(2+).

The protein resides in the cytoplasm. The catalysed reaction is L-threonine + NAD(+) = (2S)-2-amino-3-oxobutanoate + NADH + H(+). Its pathway is amino-acid degradation; L-threonine degradation via oxydo-reductase pathway; glycine from L-threonine: step 1/2. In terms of biological role, catalyzes the NAD(+)-dependent oxidation of L-threonine to 2-amino-3-ketobutyrate. In Anaeromyxobacter dehalogenans (strain 2CP-1 / ATCC BAA-258), this protein is L-threonine 3-dehydrogenase.